A 592-amino-acid chain; its full sequence is Neurogenic locus notch homolog protein (592 aa).

The first 19 residues, 1 to 19 (MIFVLTLVALCTAIHCPDG), serve as a signal peptide directing secretion. EGF-like domains lie at 64–104 (YPSI…DYQV), 106–146 (VPEA…EKCT), 267–307 (YPEA…NTCI), 353–387 (NSQTNPPQLCHSAGSCDFDTGVCSCNPTNSGPTCE), 453–488 (VPNSCVTASLIICSNRGTCTDGVCKCNEGYSGALCE), and 546–588 (IDGE…KHCN). Cystine bridges form between Cys68–Cys82, Cys76–Cys92, Cys110–Cys123, Cys117–Cys134, Cys136–Cys145, Cys271–Cys284, Cys278–Cys293, Cys295–Cys306, Cys362–Cys375, Cys377–Cys386, Cys457–Cys471, Cys478–Cys487, Cys550–Cys565, Cys555–Cys576, and Cys578–Cys587. An N-linked (GlcNAc...) asparagine glycan is attached at Asn552.

This sequence belongs to the NOTCH family. In terms of assembly, interacts with EB1.

It is found in the cell projection. It localises to the cilium. Its subcellular location is the flagellum. The protein resides in the cytoplasm. The protein localises to the cytoskeleton. It is found in the flagellum axoneme. The protein is Neurogenic locus notch homolog protein of Giardia intestinalis (strain ATCC 50803 / WB clone C6) (Giardia lamblia).